The sequence spans 218 residues: MSDVEWSVLPGLSPYQETLSAMEARVAAIRAGDAPEAVWLLEHPPLYTAGTSARPEDLVEPDRFPVHVAGRGGQYTYHGPGQRVAYVMLDLDRRGRDVRRFVCALEDWVIATLAEFNVKGERRAGRVGVWVVRPDRAPGPDGQPREDKIAAIGVKLRRWVSFHGLSINLEPDLSHFEGIVPCGIREHGVTSLVDLGLPVTMQDLDAALLRTFSRSFPD.

Residues 32-218 enclose the BPL/LPL catalytic domain; the sequence is GDAPEAVWLL…LRTFSRSFPD (187 aa). Substrate-binding positions include 71-78, 151-153, and 164-166; these read RGGQYTYH, AIG, and GLS. C182 (acyl-thioester intermediate) is an active-site residue.

This sequence belongs to the LipB family.

It is found in the cytoplasm. The catalysed reaction is octanoyl-[ACP] + L-lysyl-[protein] = N(6)-octanoyl-L-lysyl-[protein] + holo-[ACP] + H(+). The protein operates within protein modification; protein lipoylation via endogenous pathway; protein N(6)-(lipoyl)lysine from octanoyl-[acyl-carrier-protein]: step 1/2. Catalyzes the transfer of endogenously produced octanoic acid from octanoyl-acyl-carrier-protein onto the lipoyl domains of lipoate-dependent enzymes. Lipoyl-ACP can also act as a substrate although octanoyl-ACP is likely to be the physiological substrate. The sequence is that of Octanoyltransferase from Cereibacter sphaeroides (strain ATCC 17025 / ATH 2.4.3) (Rhodobacter sphaeroides).